The sequence spans 2586 residues: MGVIESPSSTTSGSAEEMAQAITGHEDSVLPVAIVGMGMRLPGGIHTPDELWGMLVEKRSTRCEIPPTRFSVDGFHSPSSKPGSIAMRHGHFLDDKDDLHRLDTSFFSMGMTEVSDIDPQQRMLLEVAYECMQSSGQTNWRGSNIGCYVGVWGEDWLDLHSKDLYDSGTYRVSGGHDFAISNRISYEYDLKGPSFTIKAGCSSSLIALHEAVRAIRAGDCDGAIVAGTNLVFSPTMSVAMTEQGVLSPDASCKTFDANANGYARGEAINAIFLKPLNNALREGDPIRALVRATSSNSDGKTPGMSMPSSESHEALIRRAYGEVFLDPKDTCFVEAHGTGTSVGDPLEATAIARVFGGSSDNKLYIGSVKPNLGHSEGASGVSSVMKAVLALENRTIPPNINFSTPNPKIPFSEMNMAVPVDAIPWPRDRPLRVSVNSFGIGGANAHCIIETLEEYLGRSLPNESQVAPIRNGNGSVQADSSSAVTSITAMKMEVRRKKRQSAVEAAGLVSNLRLVADSTKIRPSKALYVLSAANPTSLRQSVMDYQKYLASHKTDPVDVSYTLANRREHLSHRTYGVVTTESTNDTPIVPDFSPLSKTNNNSLPEINMIFTGQGAQWVGMGKELMDEYETFYNTIAYLGLVLSGLEHPPTWDLIRELSRPAESSNVGRAEFSQPLVCAVQVALVDLLRSWGITPAAVVGHSSGEMAAAYAAGAISSEEAITIAYYRGYVNQQYTRDGGMAAIGMGAQEVAPYLVEGVGVACENSPQSVTLSGDKGVLEEVCQKIKEQVPDCFVRQLKVNVAYHSHHMQDLGGLFENLLEGKVYSQSPTIPFFSSVTVQKITEPRSLDAAYWRQNLESPVRFTGAVKLLLEARASTGSKQVFVEIGPHSALSGPLRQIFKAHGRGKEAYVSAMIRGEDCTESLLKLAGELFCHGTSLQLSNVTADGDVVVDLPPYPWNHDREYWSESRVSKDWRFRKFPNHELLGSRTLESSSLQPEWRNLIRLDGIPWLRDHQVLNDVVFPCAGYLAMAVEAVRQVAGTSEIGGFTLKSVVVQSALVLTESKPVEVLTSLRPVRLTNTLDSAWWEFSIVAHNGTSWIKHCEGQVRPGQDAHQKTAVLPQSEPISQHYPRLVDNLYPELLRIGLRYGPSFRGLDNVSCVPNGKKAAAMLRETTVSESSYAIHPTTIDHCLQLFFPASCDGAFYRAEKLCVPTAIGRLYLADGKSCEVESARAEASAATNSGGSISGAATVVSKQNSTLLSLEDGKFSPLEMDLAEDGNADLVGTARLEWKPNLDFADMCSLVRPSHASMNDGPELDLVEQLTLLAILEIHERIDGAVTPGGHDHAHQHIPNFRGWIADQVTAAAEGRYRGVVADAREIASLERGARLSLMTNLRQQVLRTGAASAAVLIGRVVDHCEEIVKGELEGIELLQAEDGLTNYYNYVESRTDSIDFFATAGHTRPTLRVLEIGAGTGGGAQVILEGLTNGKERLFSTYAYTDISAGFFVAAQERFKAYKGLDFKVLDITKDPSEQGFESGSFDLIIAGNVIHATPTLNETLANVRKLLAPEGYLFLQELSPKMRMVNLIMGILPGWWLGAAEGRVEEPYLDPSQWDTVLKETGFSGVDSAIYDAPYPYHLNANIISRPAKESAPQPRAIRGRLTLLHHADDTNSSSITQLREVLDARGLETDMVVFHEHEELKAGEQDVIISLLELKKPFFSSISAAQLESFQRIVAKLGSIEMIWVTRPAQHGLSASDNPGFGLSLGLTRTLRSEQSLAITTLEIDQVNDESFKAVTNLAIKVLDHREGGSTESTRGATTMDPDREYVVENGVVKVARYHPVSLSQELASRASKPEAVTLEIGRMGLLQTLGWVPFPTSDPGYGEVTIEPRCAGLNFRDVLLCMGVVEATGVGIGLEGSGIITKVGAGVGKFQPGDPVFYLADNCFSTQITISAQRCAKIPSQLAFEDAATMPCVYATVIHSLLDVGGLRPGQSILIHSACGGIGIAALNLCRNFQGLEIYTTVGNEEKVQYLVDNFGLPRSRIFNSRDASFLYDVRAATQGRGVDLVLNSLSGDLLHASWQCVAPYGKMLEIGKRDFIGKARLEMDLFEANRSFIGIDLARFDSARCQKLLERTAAMIQTGIVQPIKPVKVFDASDAEGAFRYMQKGVHLGKIVVSIPPHSSTALPITPKPLQVKLNPEASYLLVGGLGGLGRAAATWMVESGARYLIFFSRSAGLSVRDQAFFQELASQGCTAQAVRGDVLNLADVELAMASAPPGKPIRGVLQMSMVLRDKPFADMSLEDWDTAVKPKVHGTWNLHLAAPKDLDFFFATGSISGSFGTPGQANYAAGNTYLTALFEHRRALGLPASVLQIGLIEDIGYLAKNPERAEALRAAGGFFLRTRQLLQGLNWALLSSDPHHPEYQLTIGLRSDKALSDPANRVIWKKDSRAALYHNQEISTDAGAGDDQGINAIRLLVASCEEDPGILEDPATVELVTNEIGKRVCMFMLRPVEEMDPTASLTSLGVDSLVTIEIRNWIKRTFGGVEVSTLEILNSGTIQGLARLTVDGLKARFAASEQTDGDAYLEMKAP.

One can recognise a Ketosynthase family 3 (KS3) domain in the interval 29 to 451; sequence VLPVAIVGMG…GANAHCIIET (423 aa). Catalysis depends on for beta-ketoacyl synthase activity residues Cys-201, His-336, and His-374. The segment at 609-928 is malonyl-CoA:ACP transacylase (MAT) domain; the sequence is IFTGQGAQWV…TESLLKLAGE (320 aa). An N-terminal hotdog fold region spans residues 980–1111; sequence HELLGSRTLE…GQVRPGQDAH (132 aa). The dehydratase (DH) domain stretch occupies residues 980–1269; it reads HELLGSRTLE…LEDGKFSPLE (290 aa). Positions 980-1274 constitute a PKS/mFAS DH domain; sequence HELLGSRTLE…FSPLEMDLAE (295 aa). His-1012 (proton acceptor; for dehydratase activity) is an active-site residue. A C-terminal hotdog fold region spans residues 1125–1274; it reads QHYPRLVDNL…FSPLEMDLAE (150 aa). The active-site Proton donor; for dehydratase activity is the Asp-1186. The segment at 1450-1627 is methyltransferase (CMet) domain; sequence DFFATAGHTR…GFSGVDSAIY (178 aa). Residues 1862 to 2172 are enoyl reductase (ER) (ER) domain; sequence GLLQTLGWVP…KGVHLGKIVV (311 aa). Residues 2197 to 2373 are ketoreductase (KR) domain; that stretch reads ASYLLVGGLG…ASVLQIGLIE (177 aa). Positions 2486-2565 constitute a Carrier domain; that stretch reads PATVELVTNE…GLARLTVDGL (80 aa). Residue Ser-2524 is modified to O-(pantetheine 4'-phosphoryl)serine.

It functions in the pathway mycotoxin biosynthesis. Highly reducing polyketide synthase; part of the gene cluster that mediates the biosynthesis of fumonisins B1 (FB1), B2 (FB2), B3 (FB3), and B4 (FB4), which are carcinogenic mycotoxins. The biosynthesis starts with the FUM1-catalyzed carbon chain assembly from one molecule of acetyl-CoA, eight molecules of malonyl-CoA, and two molecules of methionine (in S-adenosyl form). The C18 polyketide chain is released from the enzyme by a nucleophilic attack of a carbanion, which is derived from R-carbon of alanine by decarboxylation, on the carbonyl carbon of polyketide acyl chain. This step is catalyzed by the pyridoxal 5'-phosphate-dependent aminoacyl transferase FUM8. The resultant 3-keto intermediate is then stereospecifically reduced to a 3-hydroxyl product by reductase FUM13. Subsequent oxidations at C-10 by the cytochrome P450 monooxygenase FUM2, C-14 and C-15 by FUM6, FUM12 or FUM15, tricarballylic esterification of the hydroxyl groups on C-14 and C-15 by acyltransferase FUM14, and C-5 hydroxylation by 2-keto-glutarate-dependent dioxygenase FUM3 furnish the biosynthesis of fumonisins. The tricarballylic moieties are most likely derived from the citric acid cycle, and their addition to the carbon backbone may involve FUM7, FUM10, FUM11 and FUM14. The chain is Highly reducing polyketide synthase FUM1 from Gibberella moniliformis (strain M3125 / FGSC 7600) (Maize ear and stalk rot fungus).